The following is an 862-amino-acid chain: Probable glutaminase ARB_05535/05536 (862 aa).

The first 19 residues, 1 to 19 (MLSWVLLAWAVACSALAGA), serve as a signal peptide directing secretion. Residues N106, N273, N436, N448, N486, N610, and N744 are each glycosylated (N-linked (GlcNAc...) asparagine). The disordered stretch occupies residues 798 to 862 (FLDDKDNNSP…SQMTIVNEND (65 aa)). Residues 853-862 (SQMTIVNEND) show a composition bias toward polar residues.

It belongs to the fungal glutaminase gtaA family.

Its subcellular location is the secreted. It carries out the reaction L-glutamine + H2O = L-glutamate + NH4(+). In terms of biological role, glutaminase catalyzes the hydrolysis of glutamine to glutamic acid and plays a key role in nitrogen metabolism. The sequence is that of Probable glutaminase ARB_05535/05536 from Arthroderma benhamiae (strain ATCC MYA-4681 / CBS 112371) (Trichophyton mentagrophytes).